Here is a 464-residue protein sequence, read N- to C-terminus: FERM domain-containing protein 8 (464 aa).

The residue at position 1 (M1) is an N-acetylmethionine. Residues 1 to 22 (MDGTEGSAGQPGPAERSHRSSV) form a disordered region. Residue S24 is modified to Phosphoserine. In terms of domain architecture, FERM spans 30-376 (ADVLVYLADD…YCIELSQAAE (347 aa)). The interval 376–408 (EPAGPQDSATGSPSDPSSSLAPVQRPKLRRQGS) is disordered. Phosphoserine is present on residues S383, S387, and S408. A Phosphothreonine modification is found at T419. S439 and S446 each carry phosphoserine.

As to quaternary structure, interacts with iRhom1/RHBDF1 and iRhom2/RHBDF2 (via cytoplasmic N-termini); this interaction leads to mutual protein stabilization. Interacts with ADAM17; this interaction is indirect and mediated by iRhom proteins. Interacts with LRP6; this interaction affects LRP6-binding to AXIN1. As to expression, widely expressed, with high expression in heart and spleen.

The protein localises to the cytoplasm. Its subcellular location is the cytosol. The protein resides in the cell membrane. Promotes the cell surface stability of iRhom1/RHBDF1 and iRhom2/RHBDF2 and prevents their degradation via the endolysosomal pathway. By acting on iRhoms, involved in ADAM17-mediated shedding of TNF, amphiregulin/AREG, HBEGF and TGFA from the cell surface. Negatively regulates Wnt signaling, possibly by antagonizing the recruitment of AXIN1 to LRP6. The chain is FERM domain-containing protein 8 (FRMD8) from Homo sapiens (Human).